A 232-amino-acid chain; its full sequence is UPF0758 protein EF_2926 (232 aa).

An MPN domain is found at 107–229 (KVTSSQQVAQ…YISLREENFF (123 aa)). Histidine 178, histidine 180, and aspartate 191 together coordinate Zn(2+). Positions 178-191 (HNHPSGNPTPSPQD) match the JAMM motif motif.

The protein belongs to the UPF0758 family.

The sequence is that of UPF0758 protein EF_2926 from Enterococcus faecalis (strain ATCC 700802 / V583).